The primary structure comprises 329 residues: GTP 3',8-cyclase (329 aa).

The 227-residue stretch at 8–234 (AFARKFYYLR…QLRQRSDGPA (227 aa)) folds into the Radical SAM core domain. Arginine 17 provides a ligand contact to GTP. [4Fe-4S] cluster is bound by residues cysteine 24 and cysteine 28. Tyrosine 30 lines the S-adenosyl-L-methionine pocket. Cysteine 31 contacts [4Fe-4S] cluster. Arginine 68 provides a ligand contact to GTP. S-adenosyl-L-methionine is bound at residue glycine 72. Threonine 99 is a GTP binding site. Residue serine 123 participates in S-adenosyl-L-methionine binding. GTP is bound at residue lysine 160. Methionine 194 serves as a coordination point for S-adenosyl-L-methionine. Cysteine 257 and cysteine 260 together coordinate [4Fe-4S] cluster. 262–264 (RLR) is a binding site for GTP. Cysteine 274 is a [4Fe-4S] cluster binding site.

Belongs to the radical SAM superfamily. MoaA family. As to quaternary structure, monomer and homodimer. Requires [4Fe-4S] cluster as cofactor.

It catalyses the reaction GTP + AH2 + S-adenosyl-L-methionine = (8S)-3',8-cyclo-7,8-dihydroguanosine 5'-triphosphate + 5'-deoxyadenosine + L-methionine + A + H(+). It functions in the pathway cofactor biosynthesis; molybdopterin biosynthesis. In terms of biological role, catalyzes the cyclization of GTP to (8S)-3',8-cyclo-7,8-dihydroguanosine 5'-triphosphate. In Salmonella newport (strain SL254), this protein is GTP 3',8-cyclase.